A 298-amino-acid polypeptide reads, in one-letter code: GTP cyclohydrolase FolE2 (298 aa).

The protein belongs to the GTP cyclohydrolase IV family.

It carries out the reaction GTP + H2O = 7,8-dihydroneopterin 3'-triphosphate + formate + H(+). The protein operates within cofactor biosynthesis; 7,8-dihydroneopterin triphosphate biosynthesis; 7,8-dihydroneopterin triphosphate from GTP: step 1/1. In terms of biological role, converts GTP to 7,8-dihydroneopterin triphosphate. The sequence is that of GTP cyclohydrolase FolE2 from Pseudomonas fluorescens (strain SBW25).